Here is a 490-residue protein sequence, read N- to C-terminus: RNA-binding post-transcriptional regulator cip1 (490 aa).

Disordered stretches follow at residues 16–63 (RGLA…GSSA), 76–97 (ASSR…YSQL), and 138–199 (HNVS…GEDT). The span at 34–62 (RLQSPLNSPKLQPIGSPQASRKTSGSGSS) shows a compositional bias: polar residues. Ser-37, Ser-41, Ser-49, Ser-86, and Ser-141 each carry phosphoserine. Composition is skewed to low complexity over residues 76–88 (ASSR…PSDS) and 141–160 (SPPS…ASGK). Polar residues predominate over residues 164 to 192 (ADTSAEPSLDAFNSTQIKAGSTANSNSTP). The RRM domain maps to 202–280 (TAIVVKNIPF…RRLRVEWKRQ (79 aa)). Phosphoserine occurs at positions 397, 401, and 427. Thr-431 bears the Phosphothreonine mark. Phosphoserine occurs at positions 435, 456, and 466. The interval 457 to 490 (PLQKASTLSSPFNSKNDNDASTSASKQSFGVSHF) is disordered.

In terms of assembly, interacts with csx1. In terms of processing, phosphorylated by sty1.

The protein resides in the cytoplasm. In terms of biological role, regulates global gene expression after oxidative stress. Interacts and stabilizes mRNAs and may regulate their transition between different cytoplasmic components after oxidative stress. In Schizosaccharomyces pombe (strain 972 / ATCC 24843) (Fission yeast), this protein is RNA-binding post-transcriptional regulator cip1 (cip1).